A 165-amino-acid polypeptide reads, in one-letter code: Small ribosomal subunit protein uS5 (165 aa).

Residues Leu-13–Ile-76 form the S5 DRBM domain.

The protein belongs to the universal ribosomal protein uS5 family. As to quaternary structure, part of the 30S ribosomal subunit. Contacts proteins S4 and S8.

In terms of biological role, with S4 and S12 plays an important role in translational accuracy. Located at the back of the 30S subunit body where it stabilizes the conformation of the head with respect to the body. The protein is Small ribosomal subunit protein uS5 of Chlamydia muridarum (strain MoPn / Nigg).